A 1107-amino-acid chain; its full sequence is MSKLFGNKSQRDLKEVKPFVDKIKVAYGEIERLSDDDLRGRTAILRQKIQDYVKDERAEIDKLKVEVEGKDLDEREEIWAQVDKLEKEILDKMEVVLDEILPEAFAIIKDTARRFAQNETIRVKATDLDRDLAINHDFVSIEGDTAVYQNHWVAGGNEILWDMIHYDVQLIGGTVLHKGKIAEMATGEGKTLVATLPVFLNALTGNGVHVVTVNDYLSKRDSEWMGPLYMFHGLTVDCIDKHQPNSDARRKAYNADITFGTNNEFGFDYLRDNMATSPKDLVQRKHNYAIVDEVDSVLIDDARTPLIISGPTPKGEDQLFEEFLPNVEKVVEAQRKLCSQLLIDAKNKMASEDKKEQEEGSLLLFRSFKGLPKNKQLIKYLSEPGIKSSMLKTEEAYMAENMRNMHLVTDELYFIIDEKRNSVELTEKGIDLLTSRTDDPKFFVLPDIAAELSALDNMESDAEKRREAKDEIIANYSIKSERVHTVNQLLKAYALFEKDDQYVVMDNKVLIVDEQTGRIMDGRRYSDGLHQAIEAKEHVKVEAATQTFATITLQNYFRMYHKLAGMTGTAETEAGELWDIYKLDVVVIPTNKPIARKDMNDRIYKTAREKYAAVIEEIVRLVEEGRPVLVGTTSVEISELLSRMLRLRGIQHNVLNAKLHQKEAEIVAQAGQKGTVTIATNMAGRGTDIKLSAEVKKAGGLAIIGTERHESRRVDRQLRGRSGRQGDPGSSIFYVSLEDHLMRLFATEKIASLMDRLGFKEGEVLENNMLSKSVERAQKKVEENNFGIRKHLLEYDDVMNSQREVIYTRRRHALMGERIGMDVLNTIYDVCKALIDNYAEANDFEGFKEDLMRALAIESPITQEIFRGKKAEELTDMLFDEAYKSFQRKMDLIAEVAHPVVHQVFETQAAVYERILIPITDGKRVYNIGCNLREADETQGKSIIKEFEKAIVLHTIDESWKEHLREMDELRNSVQNASYENKDPLLIYKLESYELFRKMVEAMNRKTVAILMRARIPVPEAPSQEELEHRRQIEIRHAAEQRTDMSKYRTQKDDIEAQQKAQRDAASRPQGAAAPQTPIRNENKIGRNDPCPCGSGKKFKQCHGRNL.

Residues Q169, 187–191 (GEGKT), and D688 contribute to the ATP site. Residues 1036-1066 (RHAAEQRTDMSKYRTQKDDIEAQQKAQRDAA) are compositionally biased toward basic and acidic residues. The tract at residues 1036–1107 (RHAAEQRTDM…KFKQCHGRNL (72 aa)) is disordered. 4 residues coordinate Zn(2+): C1091, C1093, C1102, and H1103. Over residues 1097 to 1107 (KKFKQCHGRNL) the composition is skewed to basic residues.

It belongs to the SecA family. In terms of assembly, monomer and homodimer. Part of the essential Sec protein translocation apparatus which comprises SecA, SecYEG and auxiliary proteins SecDF. Other proteins may also be involved. Zn(2+) serves as cofactor.

Its subcellular location is the cell inner membrane. The protein resides in the cytoplasm. The enzyme catalyses ATP + H2O + cellular proteinSide 1 = ADP + phosphate + cellular proteinSide 2.. Its function is as follows. Part of the Sec protein translocase complex. Interacts with the SecYEG preprotein conducting channel. Has a central role in coupling the hydrolysis of ATP to the transfer of proteins into and across the cell membrane, serving as an ATP-driven molecular motor driving the stepwise translocation of polypeptide chains across the membrane. In Porphyromonas gingivalis (strain ATCC BAA-308 / W83), this protein is Protein translocase subunit SecA.